A 219-amino-acid polypeptide reads, in one-letter code: Thiopurine S-methyltransferase (219 aa).

Trp10, Leu45, Glu66, and Arg130 together coordinate S-adenosyl-L-methionine.

This sequence belongs to the class I-like SAM-binding methyltransferase superfamily. TPMT family.

It localises to the cytoplasm. The enzyme catalyses S-adenosyl-L-methionine + a thiopurine = S-adenosyl-L-homocysteine + a thiopurine S-methylether.. The polypeptide is Thiopurine S-methyltransferase (Psychrobacter cryohalolentis (strain ATCC BAA-1226 / DSM 17306 / VKM B-2378 / K5)).